Reading from the N-terminus, the 126-residue chain is Large ribosomal subunit protein bL12 (126 aa).

This sequence belongs to the bacterial ribosomal protein bL12 family. Homodimer. Part of the ribosomal stalk of the 50S ribosomal subunit. Forms a multimeric L10(L12)X complex, where L10 forms an elongated spine to which 2 to 4 L12 dimers bind in a sequential fashion. Binds GTP-bound translation factors.

Forms part of the ribosomal stalk which helps the ribosome interact with GTP-bound translation factors. Is thus essential for accurate translation. The protein is Large ribosomal subunit protein bL12 of Teredinibacter turnerae (strain ATCC 39867 / T7901).